Consider the following 123-residue polypeptide: F-box protein PP2-B3 (123 aa).

Residues 10-56 (PSPFDGLPENCISNIISFTTPRDACFAASVSKAFESAVQSDSVWEKF) enclose the F-box domain.

The protein is F-box protein PP2-B3 (PP2B3) of Arabidopsis thaliana (Mouse-ear cress).